We begin with the raw amino-acid sequence, 177 residues long: MPTPKKGPRLASSPAHERLMLANMATSLFQNGRITTTLPKAKRLRPLAERLITFAKRGDLHSRRRVMRVIRNKSVVHILFTQIAEQMEQREGGYTRIVKIAPRVGDAAPAAVIELVTEPVAKKAVVKEAEAAAKVAEEEAPAVEAEATEAVEAPVEETAAAEAEAPAEEAADAEKAE.

Residues 136–177 (AEEEAPAVEAEATEAVEAPVEETAAAEAEAPAEEAADAEKAE) are disordered. Over residues 138–149 (EEAPAVEAEATE) the composition is skewed to acidic residues. Positions 150 to 164 (AVEAPVEETAAAEAE) are enriched in low complexity.

It belongs to the bacterial ribosomal protein bL17 family. In terms of assembly, part of the 50S ribosomal subunit. Contacts protein L32.

The chain is Large ribosomal subunit protein bL17 from Bifidobacterium longum (strain NCC 2705).